The following is a 79-amino-acid chain: ATP synthase subunit 9, mitochondrial (79 aa).

2 helical membrane-spanning segments follow: residues 21 to 41 (SGLIGAGAGVGIVFGCLILAF) and 59 to 79 (FALTEAIGLLALVMAFLILFI).

It belongs to the ATPase C chain family. As to quaternary structure, F-type ATPases have 2 components, CF(1) - the catalytic core - and CF(0) - the membrane proton channel. CF(1) has five subunits: alpha(3), beta(3), gamma(1), delta(1), epsilon(1). CF(0) has three main subunits: a, b and c.

Its subcellular location is the mitochondrion membrane. Functionally, mitochondrial membrane ATP synthase (F(1)F(0) ATP synthase or Complex V) produces ATP from ADP in the presence of a proton gradient across the membrane which is generated by electron transport complexes of the respiratory chain. F-type ATPases consist of two structural domains, F(1) - containing the extramembraneous catalytic core and F(0) - containing the membrane proton channel, linked together by a central stalk and a peripheral stalk. During catalysis, ATP synthesis in the catalytic domain of F(1) is coupled via a rotary mechanism of the central stalk subunits to proton translocation. Part of the complex F(0) domain. A homomeric c-ring of probably 10 subunits is part of the complex rotary element. This chain is ATP synthase subunit 9, mitochondrial (ATP9), found in Acanthamoeba castellanii (Amoeba).